The following is a 211-amino-acid chain: Protein-L-isoaspartate O-methyltransferase (211 aa).

Ser-62 is a catalytic residue.

Belongs to the methyltransferase superfamily. L-isoaspartyl/D-aspartyl protein methyltransferase family.

The protein localises to the cytoplasm. The enzyme catalyses [protein]-L-isoaspartate + S-adenosyl-L-methionine = [protein]-L-isoaspartate alpha-methyl ester + S-adenosyl-L-homocysteine. Functionally, catalyzes the methyl esterification of L-isoaspartyl residues in peptides and proteins that result from spontaneous decomposition of normal L-aspartyl and L-asparaginyl residues. It plays a role in the repair and/or degradation of damaged proteins. This is Protein-L-isoaspartate O-methyltransferase from Shewanella putrefaciens (strain CN-32 / ATCC BAA-453).